The primary structure comprises 332 residues: Holliday junction branch migration complex subunit RuvB (332 aa).

Residues 1–181 form a large ATPase domain (RuvB-L) region; the sequence is MSRILDNEIM…FGITGHMEYY (181 aa). Residues Leu-20, Arg-21, Gly-62, Lys-65, Thr-66, Thr-67, 128-130, Arg-171, Tyr-181, and Arg-218 contribute to the ATP site; that span reads EDF. Mg(2+) is bound at residue Thr-66. The segment at 182–252 is small ATPAse domain (RuvB-S); the sequence is AHADLTEIVE…ITDKALTMLD (71 aa). The tract at residues 255–332 is head domain (RuvB-H); that stretch reads HEGLDYVDQK…EHLGYEYNEK (78 aa). The DNA site is built by Arg-291, Arg-310, Arg-312, and Arg-315.

The protein belongs to the RuvB family. In terms of assembly, homohexamer. Forms an RuvA(8)-RuvB(12)-Holliday junction (HJ) complex. HJ DNA is sandwiched between 2 RuvA tetramers; dsDNA enters through RuvA and exits via RuvB. An RuvB hexamer assembles on each DNA strand where it exits the tetramer. Each RuvB hexamer is contacted by two RuvA subunits (via domain III) on 2 adjacent RuvB subunits; this complex drives branch migration. In the full resolvosome a probable DNA-RuvA(4)-RuvB(12)-RuvC(2) complex forms which resolves the HJ.

The protein localises to the cytoplasm. It catalyses the reaction ATP + H2O = ADP + phosphate + H(+). Its function is as follows. The RuvA-RuvB-RuvC complex processes Holliday junction (HJ) DNA during genetic recombination and DNA repair, while the RuvA-RuvB complex plays an important role in the rescue of blocked DNA replication forks via replication fork reversal (RFR). RuvA specifically binds to HJ cruciform DNA, conferring on it an open structure. The RuvB hexamer acts as an ATP-dependent pump, pulling dsDNA into and through the RuvAB complex. RuvB forms 2 homohexamers on either side of HJ DNA bound by 1 or 2 RuvA tetramers; 4 subunits per hexamer contact DNA at a time. Coordinated motions by a converter formed by DNA-disengaged RuvB subunits stimulates ATP hydrolysis and nucleotide exchange. Immobilization of the converter enables RuvB to convert the ATP-contained energy into a lever motion, pulling 2 nucleotides of DNA out of the RuvA tetramer per ATP hydrolyzed, thus driving DNA branch migration. The RuvB motors rotate together with the DNA substrate, which together with the progressing nucleotide cycle form the mechanistic basis for DNA recombination by continuous HJ branch migration. Branch migration allows RuvC to scan DNA until it finds its consensus sequence, where it cleaves and resolves cruciform DNA. The protein is Holliday junction branch migration complex subunit RuvB of Streptococcus pneumoniae (strain CGSP14).